Here is a 133-residue protein sequence, read N- to C-terminus: Large ribosomal subunit protein bL20 (133 aa).

This sequence belongs to the bacterial ribosomal protein bL20 family.

Functionally, binds directly to 23S ribosomal RNA and is necessary for the in vitro assembly process of the 50S ribosomal subunit. It is not involved in the protein synthesizing functions of that subunit. This is Large ribosomal subunit protein bL20 from Bartonella quintana (strain Toulouse) (Rochalimaea quintana).